A 265-amino-acid polypeptide reads, in one-letter code: Cytochrome c oxidase subunit 3 (265 aa).

A run of 6 helical transmembrane segments spans residues 16–36, 41–61, 81–101, 162–182, 200–220, and 245–265; these read PWPISGSLGALATTVGGVMYM, GGATLLSLGLIFILYTMFVWW, GPRYGFILFIVSEVMFLFALF, AVYALVATVSLALVFTAFQGM, FFLATGFHGFHVIIGTLFSIV, and WHFVDVVRLFPFVSIYWWGGI.

Belongs to the cytochrome c oxidase subunit 3 family. As to quaternary structure, component of the cytochrome c oxidase (complex IV, CIV), a multisubunit enzyme composed of a catalytic core of 3 subunits and several supernumerary subunits. The complex exists as a monomer or a dimer and forms supercomplexes (SCs) in the inner mitochondrial membrane with ubiquinol-cytochrome c oxidoreductase (cytochrome b-c1 complex, complex III, CIII).

It localises to the mitochondrion inner membrane. It catalyses the reaction 4 Fe(II)-[cytochrome c] + O2 + 8 H(+)(in) = 4 Fe(III)-[cytochrome c] + 2 H2O + 4 H(+)(out). Component of the cytochrome c oxidase, the last enzyme in the mitochondrial electron transport chain which drives oxidative phosphorylation. The respiratory chain contains 3 multisubunit complexes succinate dehydrogenase (complex II, CII), ubiquinol-cytochrome c oxidoreductase (cytochrome b-c1 complex, complex III, CIII) and cytochrome c oxidase (complex IV, CIV), that cooperate to transfer electrons derived from NADH and succinate to molecular oxygen, creating an electrochemical gradient over the inner membrane that drives transmembrane transport and the ATP synthase. Cytochrome c oxidase is the component of the respiratory chain that catalyzes the reduction of oxygen to water. Electrons originating from reduced cytochrome c in the intermembrane space (IMS) are transferred via the dinuclear copper A center (CU(A)) of subunit 2 and heme A of subunit 1 to the active site in subunit 1, a binuclear center (BNC) formed by heme A3 and copper B (CU(B)). The BNC reduces molecular oxygen to 2 water molecules using 4 electrons from cytochrome c in the IMS and 4 protons from the mitochondrial matrix. This chain is Cytochrome c oxidase subunit 3 (COX3), found in Helianthus annuus (Common sunflower).